Here is a 228-residue protein sequence, read N- to C-terminus: HTH-type transcriptional regulator TfdT (228 aa).

The HTH lysR-type domain occupies 1-58 (MEIRQLKYFVAVAEAGGFGTAAQRMHISQPPLTRQIQALERDIGAKLFERTARGVELT). Positions 18–37 (FGTAAQRMHISQPPLTRQIQ) form a DNA-binding region, H-T-H motif.

Belongs to the LysR transcriptional regulatory family.

Its subcellular location is the cytoplasm. Does not seem to be involved in the regulation of 3-chlorocatechol degradation. Does not activate the expression of its presumed target operon, tfdCDEF. The polypeptide is HTH-type transcriptional regulator TfdT (tfdT) (Cupriavidus pinatubonensis (strain JMP 134 / LMG 1197) (Cupriavidus necator (strain JMP 134))).